The following is an 81-amino-acid chain: Translational regulator CsrA (81 aa).

Belongs to the CsrA/RsmA family. Homodimer; the beta-strands of each monomer intercalate to form a hydrophobic core, while the alpha-helices form wings that extend away from the core.

It is found in the cytoplasm. A translational regulator that binds mRNA to regulate translation initiation and/or mRNA stability. Usually binds in the 5'-UTR at or near the Shine-Dalgarno sequence preventing ribosome-binding, thus repressing translation. Its main target seems to be the major flagellin gene, while its function is anatagonized by FliW. The protein is Translational regulator CsrA of Desulforapulum autotrophicum (strain ATCC 43914 / DSM 3382 / VKM B-1955 / HRM2) (Desulfobacterium autotrophicum).